A 475-amino-acid polypeptide reads, in one-letter code: tRNA-2-methylthio-N(6)-dimethylallyladenosine synthase (475 aa).

Residues 1–10 show a composition bias toward basic and acidic residues; the sequence is MQETTVKRDG. The segment at 1–22 is disordered; that stretch reads MQETTVKRDGASPSDAGTPATT. The region spanning 27 to 144 is the MTTase N-terminal domain; it reads GKLYIRTFGC…LPDLIKRRRA (118 aa). The [4Fe-4S] cluster site is built by Cys-36, Cys-73, Cys-107, Cys-181, Cys-185, and Cys-188. Residues 167 to 400 form the Radical SAM core domain; the sequence is RVDGATAFVS…QALINQQAAA (234 aa). The region spanning 403–466 is the TRAM domain; sequence QGMIGTRQRV…TNSLRGRVAG (64 aa).

The protein belongs to the methylthiotransferase family. MiaB subfamily. Monomer. It depends on [4Fe-4S] cluster as a cofactor.

The protein resides in the cytoplasm. It catalyses the reaction N(6)-dimethylallyladenosine(37) in tRNA + (sulfur carrier)-SH + AH2 + 2 S-adenosyl-L-methionine = 2-methylsulfanyl-N(6)-dimethylallyladenosine(37) in tRNA + (sulfur carrier)-H + 5'-deoxyadenosine + L-methionine + A + S-adenosyl-L-homocysteine + 2 H(+). Catalyzes the methylthiolation of N6-(dimethylallyl)adenosine (i(6)A), leading to the formation of 2-methylthio-N6-(dimethylallyl)adenosine (ms(2)i(6)A) at position 37 in tRNAs that read codons beginning with uridine. The chain is tRNA-2-methylthio-N(6)-dimethylallyladenosine synthase from Bordetella parapertussis (strain 12822 / ATCC BAA-587 / NCTC 13253).